The following is a 1972-amino-acid chain: MDPTGSQLDSDFSQQDTPCLIIEDSQPESQVLEDDSGSHFSMLSRHLPNLQTHKENPVLDVVSNPEQTAGEERGDGNSGFNEHLKENKVADPVDSSNLDTCGSISQVIEQLPQPNRTSSVLGMSVESAPAVEEEKGEELEQKEKEKEEDTSGNTTHSLGAEDTASSQLGFGVLELSQSQDVEENTVPYEVDKEQLQSVTTNSGYTRLSDVDANTAIKHEEQSNEDIPIAEQSSKDIPVTAQPSKDVHVVKEQNPPPARSEDMPFSPKASVAAMEAKEQLSAQELMESGLQIQKSPEPEVLSTQEDLFDQSNKTVSSDGCSTPSREEGGCSLASTPATTLHLLQLSGQRSLVQDSLSTNSSDLVAPSPDAFRSTPFIVPSSPTEQEGRQDKPMDTSVLSEEGGEPFQKKLQSGEPVELENPPLLPESTVSPQASTPISQSTPVFPPGSLPIPSQPQFSHDIFIPSPSLEEQSNDGKKDGDMHSSSLTVECSKTSEIEPKNSPEDLGLSLTGDSCKLMLSTSEYSQSPKMESLSSHRIDEDGENTQIEDTEPMSPVLNSKFVPAENDSILMNPAQDGEVQLSQNDDKTKGDDTDTRDDISILATGCKGREETVAEDVCIDLTCDSGSQAVPSPATRSEALSSVLDQEEAMEIKEHHPEEGSSGSEVEEIPETPCESQGEELKEENMESVPLHLSLTETQSQGLCLQKEMPKKECSEAMEVETSVISIDSPQKLAILDQELEHKEQEAWEEATSEDSSVVIVDVKEPSPRVDVSCEPLEGVEKCSDSQSWEDIAPEIEPCAENRLDTKEEKSVEYEGDLKSGTAETEPVEQDSSQPSLPLVRADDPLRLDQELQQPQTQEKTSNSLTEDSKMANAKQLSSDAEAQKLGKPSAHASQSFCESSSETPFHFTLPKEGDIIPPLTGATPPLIGHLKLEPKRHSTPIGISNYPESTIATSDVMSESMVETHDPILGSGKGDSGAAPDVDDKLCLRMKLVSPETEASEESLQFNLEKPATGERKNGSTAVAESVASPQKTMSVLSCICEARQENEARSEDPPTTPIRGNLLHFPSSQGEEEKEKLEGDHTIRQSQQPMKPISPVKDPVSPASQKMVIQGPSSPQGEAMVTDVLEDQKEGRSTNKENPSKALIERPSQNNIGIQTMECSLRVPETVSAATQTIKNVCEQGTSTVDQNFGKQDATVQTERGSGEKPVSAPGDDTESLHSQGEEEFDMPQPPHGHVLHRHMRTIREVRTLVTRVITDVYYVDGTEVERKVTEETEEPIVECQECETEVSPSQTGGSSGDLGDISSFSSKASSLHRTSSGTSLSAMHSSGSSGKGAGPLRGKTSGTEPADFALPSSRGGPGKLSPRKGVSQTGTPVCEEDGDAGLGIRQGGKAPVTPRGRGRRGRPPSRTTGTRETAVPGPLGIEDISPNLSPDDKSFSRVVPRVPDSTRRTDVGAGALRRSDSPEIPFQAAAGPSDGLDASSPGNSFVGLRVVAKWSSNGYFYSGKITRDVGAGKYKLLFDDGYECDVLGKDILLCDPIPLDTEVTALSEDEYFSAGVVKGHRKESGELYYSIEKEGQRKWYKRMAVILSLEQGNRLREQYGLGPYEAVTPLTKAADISLDNLVEGKRKRRSNVSSPATPTASSSSSTTPTRKITESPRASMGVLSGKRKLITSEEERSPAKRGRKSATVKPGAVGAGEFVSPCESGDNTGEPSALEEQRGPLPLNKTLFLGYAFLLTMATTSDKLASRSKLPDGPTGSSEEEEEFLEIPPFNKQYTESQLRAGAGYILEDFNEAQCNTAYQCLLIADQHCRTRKYFLCLASGIPCVSHVWVHDSCHANQLQNYRNYLLPAGYSLEEQRILDWQPRENPFQNLKVLLVSDQQQNFLELWSEILMTGGAASVKQHHSSAHNKDIALGVFDVVVTDPSCPASVLKCAEALQLPVVSQEWVIQCLIVGERIGFKQHPKYKHDYVSH.

Disordered stretches follow at residues Asp24 to Met273, Gln290 to Ala332, and Gly346 to Ser507. Phosphoserine occurs at positions 25 and 63. Over residues Glu82–Asp91 the composition is skewed to basic and acidic residues. Positions Asp94–Leu121 are enriched in polar residues. Residues Ser105 and Ser124 each carry the phosphoserine modification. Residues Glu138–Asp149 are compositionally biased toward basic and acidic residues. The span at Ser151–Leu168 shows a compositional bias: polar residues. Phosphoserine is present on residues Ser166, Ser176, and Ser178. The span at Leu195–Thr205 shows a compositional bias: polar residues. A Glycyl lysine isopeptide (Lys-Gly) (interchain with G-Cter in SUMO1); alternate cross-link involves residue Lys217. A Glycyl lysine isopeptide (Lys-Gly) (interchain with G-Cter in SUMO2); alternate cross-link involves residue Lys217. 3 positions are modified to phosphoserine: Ser222, Ser265, and Ser294. Composition is skewed to polar residues over residues Leu300–Pro322 and Gly346–Asp361. The residue at position 302 (Thr302) is a Phosphothreonine. Phosphoserine is present on residues Ser366, Ser380, Ser395, Ser398, Ser429, Ser452, and Ser464. The span at Ser426–Pro441 shows a compositional bias: polar residues. Residues Val442–Ser452 show a composition bias toward pro residues. Positions His481–Ser490 are enriched in polar residues. Basic and acidic residues predominate over residues Lys491–Pro501. Phosphoserine occurs at positions 500, 507, 518, 523, and 525. Polar residues predominate over residues Ser520–Leu531. The interval Ser520–Asn556 is disordered. Acidic residues predominate over residues Glu538–Glu549. Phosphothreonine occurs at positions 543 and 548. Residues Ser552, Ser566, and Ser580 each carry the phosphoserine modification. A disordered region spans residues Leu568 to Asp595. The segment covering Asn582 to Asp595 has biased composition (basic and acidic residues). Ser630, Ser635, Ser639, and Ser640 each carry phosphoserine. The interval Glu649–Val687 is disordered. Thr670 carries the phosphothreonine modification. Ser692, Ser724, Ser727, Ser771, Ser809, Ser830, Ser831, and Ser834 each carry phosphoserine. A disordered region spans residues Glu742–Glu911. Residues Ala798 to Leu816 are compositionally biased toward basic and acidic residues. Residues Arg839–Gln848 are compositionally biased toward basic and acidic residues. The segment covering Glu849–Thr864 has biased composition (polar residues). Thr855 is subject to Phosphothreonine. A Glycyl lysine isopeptide (Lys-Gly) (interchain with G-Cter in SUMO1); alternate cross-link involves residue Lys868. Lys868 participates in a covalent cross-link: Glycyl lysine isopeptide (Lys-Gly) (interchain with G-Cter in SUMO2); alternate. Residues His890–Thr902 are compositionally biased toward polar residues. Phosphothreonine is present on Thr922. A Glycyl lysine isopeptide (Lys-Gly) (interchain with G-Cter in SUMO2) cross-link involves residue Lys930. A phosphoserine mark is found at Ser970 and Ser975. Residue Lys984 forms a Glycyl lysine isopeptide (Lys-Gly) (interchain with G-Cter in SUMO2) linkage. Disordered regions lie at residues Glu997 to Ser1028 and Glu1045 to Ala1103. The span at Gly1018–Ser1028 shows a compositional bias: polar residues. Phosphoserine is present on Ser1028. The residue at position 1056 (Thr1056) is a Phosphothreonine. Ser1068 bears the Phosphoserine mark. Over residues Glu1071–Ile1083 the composition is skewed to basic and acidic residues. Residues Ser1086, Ser1094, Ser1101, and Ser1114 each carry the phosphoserine modification. The segment covering Asp1127 to Pro1139 has biased composition (basic and acidic residues). Disordered regions lie at residues Asp1127–Ser1148, Asn1188–His1232, and Val1269–Asp1478. Ser1148 is subject to Phosphoserine. Polar residues predominate over residues Asn1188–Arg1200. Phosphothreonine is present on Thr1214. A phosphoserine mark is found at Ser1216 and Ser1219. The segment covering Glu1272–Thr1285 has biased composition (acidic residues). Composition is skewed to low complexity over residues Asp1298–Ser1307 and Ser1316–Ser1329. Ser1317 and Ser1342 each carry phosphoserine. Arg1355 carries the post-translational modification Omega-N-methylarginine. Position 1362 is a phosphoserine (Ser1362). A Glycyl lysine isopeptide (Lys-Gly) (interchain with G-Cter in SUMO2) cross-link involves residue Lys1365. The residue at position 1368 (Ser1368) is a Phosphoserine. Thr1372 is modified (phosphothreonine). Positions Arg1396–Arg1403 match the GAR motif. Phosphoserine is present on residues Ser1426 and Ser1430. A Glycyl lysine isopeptide (Lys-Gly) (interchain with G-Cter in SUMO1); alternate cross-link involves residue Lys1434. Residue Lys1434 forms a Glycyl lysine isopeptide (Lys-Gly) (interchain with G-Cter in SUMO2); alternate linkage. Residues Ser1460, Ser1462, and Ser1474 each carry the phosphoserine modification. Residues Asn1484–Gly1603 form a tudor-like region. The segment at Trp1495–Tyr1523 is interaction with dimethylated histone H4. Residue Lys1563 forms a Glycyl lysine isopeptide (Lys-Gly) (interchain with G-Cter in SUMO1); alternate linkage. Lys1563 participates in a covalent cross-link: Glycyl lysine isopeptide (Lys-Gly) (interchain with G-Cter in SUMO2); alternate. A UDR motif is present at residues Pro1604–Ser1631. Thr1609 carries the phosphothreonine modification. Phosphoserine occurs at positions 1618, 1631, and 1635. Disordered regions lie at residues Leu1622 to Arg1719 and Leu1745 to Ile1768. Residues Ser1634–Thr1650 show a composition bias toward low complexity. Phosphothreonine occurs at positions 1638 and 1648. 3 positions are modified to phosphoserine: Ser1656, Ser1673, and Ser1678. A Glycyl lysine isopeptide (Lys-Gly) (interchain with G-Cter in ubiquitin) cross-link involves residue Lys1685. Phosphoserine is present on residues Ser1701, Ser1759, and Ser1778. 2 BRCT domains span residues Leu1724 to Leu1848 and Pro1864 to Lys1964.

Homoligomer. Interacts with p53/TP53 (via the central domain). Interacts with DCLRE1C. Interacts with histone H2AX and this requires phosphorylation of H2AX on 'Ser-139'. Interacts with histone H4 that has been dimethylated at 'Lys-20' (H4K20me2). Has low affinity for histone H4 containing monomethylated 'Lys-20' (H4K20me1). Does not bind histone H4 containing unmethylated or trimethylated 'Lys-20' (H4K20me3). Has low affinity for histone H3 that has been dimethylated on 'Lys-79'. Has very low affinity for histone H3 that has been monomethylated on 'Lys-79' (in vitro). Does not bind unmethylated histone H3. Interacts with histone H2A monoubiquitinated at 'Lys-15' (H2AK15Ub). Interacts with PWWP3A/EXPAND1. Interacts with CHEK2; modulates CHEK2 phosphorylation at 'Thr-68' in response to infrared. Interacts with MSL1; this interaction may be required for MSL1 DNA repair activity, but not for histone acetyltransferase activity. Interacts (when phosphorylated by ATM) with RIF1. Interacts (via the Tudor-like domain) with NUDT16L1/TIRR; interaction masks the Tudor-like domain and prevents recruitment to chromatin. Interacts with PAXIP1. Interacts with SHLD2. Interacts (when phosphorylated) with TOPBP1. Interacts with GFI1; promoting methylation by PRMT1. Interacts with (phosphorylated) DYNLL1; specifically binds DYNLL1 phosphorylated at 'Ser-88' and promotes its recruitment to double stand breaks (DSBs). As to quaternary structure, (Microbial infection) Interacts (via C-terminus) with Epstein-Barr virus lytic switch protein BZLF1 (via C-terminus); this interaction is involved in the activation of the viral lytic cycle. Post-translationally, asymmetrically dimethylated on Arg residues by PRMT1. Methylation is required for DNA binding. Phosphorylated at basal level in the absence of DNA damage. Phosphorylated by ATM in response to DNA damage: phosphorylation at different sites promotes interaction with different set of proteins: phosphorylation at the N-terminus by ATM (residues from 6-178) promotes interaction with PAXIP1 and non-homologous end joining (NHEJ) of dysfunctional telomeres. Phosphorylation by ATM at residues that are located more C-terminus (residues 300-650) leads to promote interaction with RIF1. Interaction with RIF1 leads to disrupt interaction with NUDT16L1/TIRR. Phosphorylation at Thr-1609 and Ser-1618 in the UDR motif blocks interaction with H2AK15ub. Dephosphorylated by PPP4C. Hyperphosphorylation during mitosis correlates with its exclusion from chromatin and DNA lesions. Hyperphosphorylated in an ATR-dependent manner in response to DNA damage induced by UV irradiation. Dephosphorylated by PPP5C. Phosphorylation at Ser-366 and Thr-670 promotes interaction with TOPBP1. Phosphorylated by VRK1. In terms of processing, monoubiquitinated at Lys-1685 by MSL2 is reponse to DNA damage, leading to its stabilization.

It localises to the nucleus. The protein resides in the chromosome. The protein localises to the centromere. Its subcellular location is the kinetochore. In terms of biological role, double-strand break (DSB) repair protein involved in response to DNA damage, telomere dynamics and class-switch recombination (CSR) during antibody genesis. Plays a key role in the repair of double-strand DNA breaks (DSBs) in response to DNA damage by promoting non-homologous end joining (NHEJ)-mediated repair of DSBs and specifically counteracting the function of the homologous recombination (HR) repair protein BRCA1. In response to DSBs, phosphorylation by ATM promotes interaction with RIF1 and dissociation from NUDT16L1/TIRR, leading to recruitment to DSBs sites. Recruited to DSBs sites by recognizing and binding histone H2A monoubiquitinated at 'Lys-15' (H2AK15Ub) and histone H4 dimethylated at 'Lys-20' (H4K20me2), two histone marks that are present at DSBs sites. Required for immunoglobulin class-switch recombination (CSR) during antibody genesis, a process that involves the generation of DNA DSBs. Participates in the repair and the orientation of the broken DNA ends during CSR. In contrast, it is not required for classic NHEJ and V(D)J recombination. Promotes NHEJ of dysfunctional telomeres via interaction with PAXIP1. The chain is TP53-binding protein 1 from Homo sapiens (Human).